The chain runs to 156 residues: PopC secretion inhibitor (156 aa).

The disordered stretch occupies residues 1 to 89; sequence MNPGSAPWER…PVRSRAEVHQ (89 aa). Residues 8–28 are compositionally biased toward basic and acidic residues; it reads WERRTRERMRAMSRKNGEWGD.

As to quaternary structure, interacts with PopC in non-starving cells.

Its subcellular location is the cytoplasm. In response to starvation, RelA is activated resulting in the accumulation of (p)ppGpp, which causes the degradation of PopD in an FtsH(D)-dependent manner, thereby releasing pre-formed PopC for secretion. Functionally, inhibitor of protease PopC. In non-starving cells, forms a cytoplasmic complex with PopC and inhibits PopC secretion and activity. This chain is PopC secretion inhibitor, found in Myxococcus xanthus (strain DK1622).